Here is a 597-residue protein sequence, read N- to C-terminus: Elongation factor 4 (597 aa).

The tr-type G domain maps to 2-184 (DHIRNFSIIA…ALIAKVPPPK (183 aa)). GTP is bound by residues 14–19 (DHGKST) and 131–134 (NKID).

This sequence belongs to the TRAFAC class translation factor GTPase superfamily. Classic translation factor GTPase family. LepA subfamily.

It localises to the cell inner membrane. It carries out the reaction GTP + H2O = GDP + phosphate + H(+). Its function is as follows. Required for accurate and efficient protein synthesis under certain stress conditions. May act as a fidelity factor of the translation reaction, by catalyzing a one-codon backward translocation of tRNAs on improperly translocated ribosomes. Back-translocation proceeds from a post-translocation (POST) complex to a pre-translocation (PRE) complex, thus giving elongation factor G a second chance to translocate the tRNAs correctly. Binds to ribosomes in a GTP-dependent manner. The protein is Elongation factor 4 of Cupriavidus taiwanensis (strain DSM 17343 / BCRC 17206 / CCUG 44338 / CIP 107171 / LMG 19424 / R1) (Ralstonia taiwanensis (strain LMG 19424)).